We begin with the raw amino-acid sequence, 147 residues long: UPF0306 protein YhbP (147 aa).

The protein belongs to the UPF0306 family.

In Escherichia coli (strain SMS-3-5 / SECEC), this protein is UPF0306 protein YhbP.